The sequence spans 253 residues: MSKLTQVFKQTKLCIGYLTAGDGGTSYTIEAAKALIQGGVDILELGFPFSDPVADNPEIQVSHDRALAENLTSETLLEIVEGIRAFNQEVPLILYSYYNPLLQRDLDYLRRLKDAGINGVCVIDLPAPLSHGEKSPFFEDLLAVGLDPILLISAGTTPERMSLIQEYARGFLYYIPCQATRDSEVGIKEEFRKVREHFDLPIVDRRDICDKKEAAHVLNYSDGFIVKTAFVHQTTMDSSVETLTALAQTVIPG.

Catalysis depends on proton acceptor residues Glu44 and Asp55.

Belongs to the TrpA family. As to quaternary structure, tetramer of two alpha and two beta chains.

The enzyme catalyses (1S,2R)-1-C-(indol-3-yl)glycerol 3-phosphate + L-serine = D-glyceraldehyde 3-phosphate + L-tryptophan + H2O. It functions in the pathway amino-acid biosynthesis; L-tryptophan biosynthesis; L-tryptophan from chorismate: step 5/5. In terms of biological role, the alpha subunit is responsible for the aldol cleavage of indoleglycerol phosphate to indole and glyceraldehyde 3-phosphate. The protein is Tryptophan synthase alpha chain (trpA) of Chlamydia trachomatis serovar D (strain ATCC VR-885 / DSM 19411 / UW-3/Cx).